The chain runs to 432 residues: Adenylosuccinate synthetase (432 aa).

GTP is bound by residues 13–19 (GDEGKGK) and 41–43 (GHT). Catalysis depends on D14, which acts as the Proton acceptor. Mg(2+)-binding residues include D14 and G41. IMP-binding positions include 14-17 (DEGK), 39-42 (NAGH), T130, R144, Q225, T240, and R304. Residue H42 is the Proton donor of the active site. 300–306 (ATTGRRR) provides a ligand contact to substrate. Residues R306, 332–334 (KLD), and 415–417 (STG) each bind GTP.

It belongs to the adenylosuccinate synthetase family. As to quaternary structure, homodimer. It depends on Mg(2+) as a cofactor.

It localises to the cytoplasm. The catalysed reaction is IMP + L-aspartate + GTP = N(6)-(1,2-dicarboxyethyl)-AMP + GDP + phosphate + 2 H(+). It participates in purine metabolism; AMP biosynthesis via de novo pathway; AMP from IMP: step 1/2. Plays an important role in the de novo pathway of purine nucleotide biosynthesis. Catalyzes the first committed step in the biosynthesis of AMP from IMP. This Salmonella typhi protein is Adenylosuccinate synthetase.